A 177-amino-acid chain; its full sequence is Coatomer subunit zeta-1 (177 aa).

Met-1 carries the post-translational modification N-acetylmethionine.

This sequence belongs to the adaptor complexes small subunit family. As to quaternary structure, oligomeric complex that consists of at least the alpha, beta, beta', gamma, delta, epsilon and zeta subunits.

It is found in the cytoplasm. The protein localises to the golgi apparatus membrane. The protein resides in the cytoplasmic vesicle. Its subcellular location is the COPI-coated vesicle membrane. Functionally, the coatomer is a cytosolic protein complex that binds to dilysine motifs and reversibly associates with Golgi non-clathrin-coated vesicles, which further mediate biosynthetic protein transport from the ER, via the Golgi up to the trans Golgi network. Coatomer complex is required for budding from Golgi membranes, and is essential for the retrograde Golgi-to-ER transport of dilysine-tagged proteins. The zeta subunit may be involved in regulating the coat assembly and, hence, the rate of biosynthetic protein transport due to its association-dissociation properties with the coatomer complex. This Homo sapiens (Human) protein is Coatomer subunit zeta-1 (COPZ1).